A 273-amino-acid polypeptide reads, in one-letter code: SUMO-1 cysteine protease S273R (273 aa).

Residues His168 and Asn187 contribute to the active site. Residue Gln226 participates in substrate binding. The Nucleophile role is filled by Cys232.

It belongs to the peptidase C63 family.

The protein resides in the host cytoplasm. It localises to the virion. Cysteine protease that plays several role during infection including processing of the structural polyprotein or inhibition of the host immune response. Catalyzes the maturation of the pp220 and pp62 polyprotein precursors into core-shell proteins. Plays a role in the disruption of host pyroptosis via specific cleavage of gasdermin D/GSDMD. In addition, strongly decreases the host cGAS-STING signaling by targeting IKBKE via its enzymatic activity. Also impairs host FOXJ1-mediated antiviral effect via degradation of FOXJ1. The sequence is that of SUMO-1 cysteine protease S273R from Ornithodoros (relapsing fever ticks).